A 149-amino-acid polypeptide reads, in one-letter code: Arginine repressor (149 aa).

It belongs to the ArgR family.

The protein resides in the cytoplasm. It participates in amino-acid biosynthesis; L-arginine biosynthesis [regulation]. In terms of biological role, regulates arginine biosynthesis genes. The polypeptide is Arginine repressor (Oceanobacillus iheyensis (strain DSM 14371 / CIP 107618 / JCM 11309 / KCTC 3954 / HTE831)).